We begin with the raw amino-acid sequence, 673 residues long: Paralemmin-3 (673 aa).

Coiled coils occupy residues 4-49 (SSLY…LRER) and 75-101 (GQAQ…LQSA). Disordered regions lie at residues 49-78 (RWLM…GQAQ) and 99-213 (QSAS…GEAK). Residues 123–137 (LSQSIVEAGSVGQTD) are compositionally biased toward polar residues. Ser-124 and Ser-143 each carry phosphoserine. Thr-151 is modified (phosphothreonine). Residues Ser-155, Ser-157, and Ser-260 each carry the phosphoserine modification. Disordered stretches follow at residues 295–343 (VPEV…SFIW) and 356–673 (LLVE…CAVM). Phosphothreonine is present on Thr-301. Ser-325 is modified (phosphoserine). Over residues 327 to 338 (EGDGQGGSGGEE) the composition is skewed to gly residues. Phosphoserine is present on residues Ser-375 and Ser-420. 2 stretches are compositionally biased toward basic and acidic residues: residues 392–477 (EAEK…KRGA) and 487–532 (GVEK…EKTQ). Ser-544 and Ser-660 each carry phosphoserine. S-palmitoyl cysteine attachment occurs at residues Cys-667 and Cys-669. Cysteine methyl ester is present on Cys-670. The S-farnesyl cysteine moiety is linked to residue Cys-670. Positions 671–673 (AVM) are cleaved as a propeptide — removed in mature form.

It belongs to the paralemmin family. As to quaternary structure, interacts with SIGIRR. In terms of processing, palmitoylated on Cys-667 and Cys-669 and prenylated on Cys-670; which is required for membrane association.

It localises to the cytoplasm. The protein resides in the cell membrane. Functionally, ATP-binding protein, which may act as a adapter in the Toll-like receptor (TLR) signaling. The protein is Paralemmin-3 (PALM3) of Homo sapiens (Human).